The sequence spans 282 residues: Shikimate kinase (282 aa).

86–96 contributes to the ATP binding site; the sequence is PIKSGLSSSSA.

It belongs to the GHMP kinase family. Archaeal shikimate kinase subfamily.

It localises to the cytoplasm. The enzyme catalyses shikimate + ATP = 3-phosphoshikimate + ADP + H(+). It participates in metabolic intermediate biosynthesis; chorismate biosynthesis; chorismate from D-erythrose 4-phosphate and phosphoenolpyruvate: step 5/7. The sequence is that of Shikimate kinase (aroK) from Methanocaldococcus jannaschii (strain ATCC 43067 / DSM 2661 / JAL-1 / JCM 10045 / NBRC 100440) (Methanococcus jannaschii).